We begin with the raw amino-acid sequence, 61 residues long: DNA-directed RNA polymerase subunit Rpo6 (61 aa).

It belongs to the archaeal Rpo6/eukaryotic RPB6 RNA polymerase subunit family. As to quaternary structure, part of the RNA polymerase complex.

Its subcellular location is the cytoplasm. The enzyme catalyses RNA(n) + a ribonucleoside 5'-triphosphate = RNA(n+1) + diphosphate. Functionally, DNA-dependent RNA polymerase (RNAP) catalyzes the transcription of DNA into RNA using the four ribonucleoside triphosphates as substrates. This Thermoplasma acidophilum (strain ATCC 25905 / DSM 1728 / JCM 9062 / NBRC 15155 / AMRC-C165) protein is DNA-directed RNA polymerase subunit Rpo6.